The primary structure comprises 586 residues: Eukaryotic translation initiation factor 3 subunit D (586 aa).

The segment at 107–154 is disordered; that stretch reads FGRGGGTVFRGRAQRGGAGQRGGRAGFQRVGAGRGQGGDRYYDNRGAR. Gly residues predominate over residues 108–131; it reads GRGGGTVFRGRAQRGGAGQRGGRA. The RNA gate stretch occupies residues 301–315; it reads SLDLVTVNENAADAP. The span at 566–577 shows a compositional bias: acidic residues; sequence FEEDDEAAEEEQ. The segment at 566–586 is disordered; sequence FEEDDEAAEEEQEAKGEVEEA.

It belongs to the eIF-3 subunit D family. Component of the eukaryotic translation initiation factor 3 (eIF-3) complex.

It is found in the cytoplasm. MRNA cap-binding component of the eukaryotic translation initiation factor 3 (eIF-3) complex, which is involved in protein synthesis of a specialized repertoire of mRNAs and, together with other initiation factors, stimulates binding of mRNA and methionyl-tRNAi to the 40S ribosome. The eIF-3 complex specifically targets and initiates translation of a subset of mRNAs involved in cell proliferation. In the eIF-3 complex, eif3d specifically recognizes and binds the 7-methylguanosine cap of a subset of mRNAs. The protein is Eukaryotic translation initiation factor 3 subunit D of Emericella nidulans (strain FGSC A4 / ATCC 38163 / CBS 112.46 / NRRL 194 / M139) (Aspergillus nidulans).